The chain runs to 564 residues: Ferric/cupric reductase transmembrane component 2 (564 aa).

A run of 2 helical transmembrane segments spans residues 10-30 (TLGSIALIFVLLIGFALLFLL) and 66-86 (FIFLATHKAQMTLILSPLVML). N-linked (GlcNAc...) asparagine glycosylation is present at N106. The chain crosses the membrane as a helical span at residues 110 to 130 (VAARLGYLSCGLFFVSYFFSL). Residues 114–229 (LGYLSCGLFF…TCSVLIIFLI (116 aa)) form the Ferric oxidoreductase domain. Heme contacts are provided by H150 and H164. The next 3 helical transmembrane spans lie at 152–172 (WLSVYAVLISVLHGILFMIFS), 184–204 (ISIYGYFITVVLFLMTVASLP), and 210–230 (FFEWFFVLHHTCSVLIIFLIW). Heme-binding residues include H218 and H232. The 157-residue stretch at 254–410 (RLFRSIWNRS…DGPYGTTSNV (157 aa)) folds into the FAD-binding FR-type domain. The N-linked (GlcNAc...) asparagine glycan is linked to N261. 310–316 (HPFTLAS) serves as a coordination point for FAD. N350 carries N-linked (GlcNAc...) asparagine glycosylation. 419–427 (LIAGGVGFS) contacts NAD(+). N442, N496, and N548 each carry an N-linked (GlcNAc...) asparagine glycan.

The protein belongs to the ferric reductase (FRE) family. FAD serves as cofactor. Requires heme as cofactor.

It is found in the cell membrane. The protein localises to the endoplasmic reticulum membrane. The enzyme catalyses 2 a Fe(II)-siderophore + NADP(+) + H(+) = 2 a Fe(III)-siderophore + NADPH. In terms of biological role, metalloreductase responsible for reducing extracellular iron and copper prior to import. Catalyzes the reductive uptake of Fe(3+)-salts and Fe(3+) bound to catecholate or hydroxamate siderophores. Fe(3+) is reduced to Fe(2+), which then dissociates from the siderophore and can be imported by the high-affinity Fe(2+) transport complex in the plasma membrane. Also participates in Cu(2+) reduction and Cu(+) uptake. The protein is Ferric/cupric reductase transmembrane component 2 (frp2) of Schizosaccharomyces pombe (strain 972 / ATCC 24843) (Fission yeast).